The sequence spans 247 residues: 2,3-bisphosphoglycerate-dependent phosphoglycerate mutase (247 aa).

Substrate-binding positions include 8 to 15 (RHGESTWN), 21 to 22 (TG), Arg-60, 87 to 90 (ERHY), Lys-98, 114 to 115 (RR), and 183 to 184 (GN). The active-site Tele-phosphohistidine intermediate is the His-9. Catalysis depends on Glu-87, which acts as the Proton donor/acceptor.

This sequence belongs to the phosphoglycerate mutase family. BPG-dependent PGAM subfamily. As to quaternary structure, homodimer.

It catalyses the reaction (2R)-2-phosphoglycerate = (2R)-3-phosphoglycerate. It participates in carbohydrate degradation; glycolysis; pyruvate from D-glyceraldehyde 3-phosphate: step 3/5. Catalyzes the interconversion of 2-phosphoglycerate and 3-phosphoglycerate. The chain is 2,3-bisphosphoglycerate-dependent phosphoglycerate mutase from Methylibium petroleiphilum (strain ATCC BAA-1232 / LMG 22953 / PM1).